We begin with the raw amino-acid sequence, 206 residues long: ATP-dependent Clp protease proteolytic subunit (206 aa).

The active-site Nucleophile is Ser101. His126 is a catalytic residue.

The protein belongs to the peptidase S14 family. Component of the chloroplastic Clp protease core complex.

The protein resides in the plastid. It is found in the chloroplast stroma. The catalysed reaction is Hydrolysis of proteins to small peptides in the presence of ATP and magnesium. alpha-casein is the usual test substrate. In the absence of ATP, only oligopeptides shorter than five residues are hydrolyzed (such as succinyl-Leu-Tyr-|-NHMec, and Leu-Tyr-Leu-|-Tyr-Trp, in which cleavage of the -Tyr-|-Leu- and -Tyr-|-Trp bonds also occurs).. Functionally, cleaves peptides in various proteins in a process that requires ATP hydrolysis. Has a chymotrypsin-like activity. Plays a major role in the degradation of misfolded proteins. The chain is ATP-dependent Clp protease proteolytic subunit from Solanum lycopersicum (Tomato).